The sequence spans 162 residues: Ribosome maturation factor RimM (162 aa).

A PRC barrel domain is found at 86 to 160 (EGRYYYFALI…SIHVDPIPGL (75 aa)).

This sequence belongs to the RimM family. In terms of assembly, binds ribosomal protein uS19.

Its subcellular location is the cytoplasm. In terms of biological role, an accessory protein needed during the final step in the assembly of 30S ribosomal subunit, possibly for assembly of the head region. Essential for efficient processing of 16S rRNA. May be needed both before and after RbfA during the maturation of 16S rRNA. It has affinity for free ribosomal 30S subunits but not for 70S ribosomes. The sequence is that of Ribosome maturation factor RimM from Thermus thermophilus (strain ATCC 27634 / DSM 579 / HB8).